The chain runs to 307 residues: Cysteine synthase (307 aa).

Residue Lys42 is modified to N6-(pyridoxal phosphate)lysine. Pyridoxal 5'-phosphate is bound by residues Asn72, 176–180 (GTGGH), and Ser263.

It belongs to the cysteine synthase/cystathionine beta-synthase family. Pyridoxal 5'-phosphate is required as a cofactor.

It catalyses the reaction O-acetyl-L-serine + hydrogen sulfide = L-cysteine + acetate. It functions in the pathway amino-acid biosynthesis; L-cysteine biosynthesis; L-cysteine from L-serine: step 2/2. This is Cysteine synthase (cysK) from Flavobacterium sp. (strain K3-15 / DSM ID92-509).